A 324-amino-acid polypeptide reads, in one-letter code: Probable UDP-sugar transporter protein SLC35A4 (324 aa).

The Cytoplasmic segment spans residues 1–18 (MSVEDGGMPGLGRPRQAR). The chain crosses the membrane as a helical span at residues 19–39 (WTLMLLLSTAMYGAHAPLLAL). The Lumenal portion of the chain corresponds to 40-52 (CHVDGRVPFRPSS). The chain crosses the membrane as a helical span at residues 53–73 (AVLLTELTKLLLCAFSLLVGW). At 74–85 (QAWPQGPPPWRQ) the chain is on the cytoplasmic side. A helical transmembrane segment spans residues 86-106 (AAPFALSALLYGANNNLVIYL). Topologically, residues 107–142 (QRYMDPSTYQVLSNLKIGSTAVLYCLCLRHRLSVRQ) are lumenal. A helical membrane pass occupies residues 143 to 163 (GLALLLLMAAGACYAAGGLQV). Over 164–180 (PGNTLPSPPPAAAASPM) the chain is Cytoplasmic. The chain crosses the membrane as a helical span at residues 181–201 (PLHITPLGLLLLILYCLISGL). At 202-214 (SSVYTELLMKRQR) the chain is on the lumenal side. Residues 215–235 (LPLALQNLFLYTFGVLLNLGL) form a helical membrane-spanning segment. Topologically, residues 236 to 250 (HAGGGSGPGLLEGFS) are cytoplasmic. Residues 251–271 (GWAALVVLSQALNGLLMSAVM) form a helical membrane-spanning segment. At 272–275 (KHGS) the chain is on the lumenal side. A helical transmembrane segment spans residues 276 to 298 (SITRLFVVSCSLVVNAVLSAVLL). The Cytoplasmic segment spans residues 299 to 324 (RLQLTAAFFLATLLIGLAMRLYYGSR).

It belongs to the nucleotide-sugar transporter family. SLC35A subfamily. As to quaternary structure, found in a complex with SLC35A2 and SLC35A3.

Its subcellular location is the golgi apparatus membrane. The enzyme catalyses CDP-L-ribitol(in) + CDP(out) = CDP-L-ribitol(out) + CDP(in). Mediates the transport of CDP-ribitol. Does not exhibit CMP-sialic acid, UDP-galactose and UDP-N-acetylglucosamine transport activity. This is Probable UDP-sugar transporter protein SLC35A4 from Homo sapiens (Human).